Consider the following 274-residue polypeptide: Uridine-5'-phosphate dioxygenase (274 aa).

Residues H103, D105, and H246 each coordinate Fe cation.

Requires Fe(2+) as cofactor.

The catalysed reaction is UMP + 2-oxoglutarate + O2 = uridine-5'-aldehyde + succinate + phosphate + CO2. Its pathway is antibiotic biosynthesis. Inhibited by several divalent cations, including Zn(2+). Its function is as follows. Dioxygenase involved in the biosynthesis of the lipopeptidyl nucleoside antibiotic A-90289. Catalyzes the dephosphorylation and oxidation of UMP to generate uridine-5'-aldehyde, the first intermediate in the biosynthesis of A-90289. In Streptomyces sp, this protein is Uridine-5'-phosphate dioxygenase.